We begin with the raw amino-acid sequence, 236 residues long: Large ribosomal subunit protein uL3 (236 aa).

A disordered region spans residues 139–163 (ARDSSTTHEHHRHVGAIGQRKTPGK).

The protein belongs to the universal ribosomal protein uL3 family. Part of the 50S ribosomal subunit. Forms a cluster with proteins L14 and L19.

In terms of biological role, one of the primary rRNA binding proteins, it binds directly near the 3'-end of the 23S rRNA, where it nucleates assembly of the 50S subunit. The protein is Large ribosomal subunit protein uL3 of Anaeromyxobacter sp. (strain Fw109-5).